A 262-amino-acid polypeptide reads, in one-letter code: Carbohydrate deacetylase (262 aa).

Histidine 129 contributes to the Mg(2+) binding site.

It belongs to the YdjC deacetylase family. As to quaternary structure, homodimer. Mg(2+) is required as a cofactor.

Functionally, probably catalyzes the deacetylation of acetylated carbohydrates an important step in the degradation of oligosaccharides. This Enterococcus faecalis (strain ATCC 700802 / V583) protein is Carbohydrate deacetylase.